The sequence spans 106 residues: Large ribosomal subunit protein uL24 (106 aa).

The protein belongs to the universal ribosomal protein uL24 family. As to quaternary structure, part of the 50S ribosomal subunit.

One of two assembly initiator proteins, it binds directly to the 5'-end of the 23S rRNA, where it nucleates assembly of the 50S subunit. In terms of biological role, one of the proteins that surrounds the polypeptide exit tunnel on the outside of the subunit. This chain is Large ribosomal subunit protein uL24, found in Spiroplasma kunkelii.